Consider the following 221-residue polypeptide: Deoxyribose-phosphate aldolase (221 aa).

The active-site Proton donor/acceptor is D91. The active-site Schiff-base intermediate with acetaldehyde is the K153. Residue K182 is the Proton donor/acceptor of the active site.

It belongs to the DeoC/FbaB aldolase family. DeoC type 1 subfamily.

It localises to the cytoplasm. It carries out the reaction 2-deoxy-D-ribose 5-phosphate = D-glyceraldehyde 3-phosphate + acetaldehyde. The protein operates within carbohydrate degradation; 2-deoxy-D-ribose 1-phosphate degradation; D-glyceraldehyde 3-phosphate and acetaldehyde from 2-deoxy-alpha-D-ribose 1-phosphate: step 2/2. Its function is as follows. Catalyzes a reversible aldol reaction between acetaldehyde and D-glyceraldehyde 3-phosphate to generate 2-deoxy-D-ribose 5-phosphate. In Clostridium botulinum (strain Alaska E43 / Type E3), this protein is Deoxyribose-phosphate aldolase.